Consider the following 633-residue polypeptide: Chaperone protein DnaK (633 aa).

Residue threonine 198 is modified to Phosphothreonine; by autocatalysis. Residues 599 to 633 form a disordered region; sequence QQASQETPGDGDAGAAGAKKKDDDDVVDADYEEVK. The segment covering 622–633 has biased composition (acidic residues); that stretch reads DDVVDADYEEVK.

It belongs to the heat shock protein 70 family.

Acts as a chaperone. This chain is Chaperone protein DnaK, found in Desulfotalea psychrophila (strain LSv54 / DSM 12343).